The chain runs to 485 residues: Apolipoprotein N-acyltransferase (485 aa).

Transmembrane regions (helical) follow at residues 8 to 28 (IAGAILPLAFAPFNWFPIAFV), 49 to 69 (GWLFGFGFFGAGASWVYVSIH), 76 to 96 (VPLAVLITVLFVFVLALFIAF), 121 to 141 (WWVVWEWLRSILFTGFPWLFL), 157 to 177 (FGIYGISLIVAFISGCIYLLV), and 186 to 206 (IMCLILIILPFIVGWVLTFIP). The 238-residue stretch at 220–457 (VQGNIGQRLK…RLLLTGQIKP (238 aa)) folds into the CN hydrolase domain. Glu-259 (proton acceptor) is an active-site residue. Residue Lys-317 is part of the active site. Residue Cys-369 is the Nucleophile of the active site. A helical membrane pass occupies residues 464–484 (LMRWNYYPVVGIIIIFLLLTF).

It belongs to the CN hydrolase family. Apolipoprotein N-acyltransferase subfamily.

The protein resides in the cell inner membrane. It carries out the reaction N-terminal S-1,2-diacyl-sn-glyceryl-L-cysteinyl-[lipoprotein] + a glycerophospholipid = N-acyl-S-1,2-diacyl-sn-glyceryl-L-cysteinyl-[lipoprotein] + a 2-acyl-sn-glycero-3-phospholipid + H(+). Its pathway is protein modification; lipoprotein biosynthesis (N-acyl transfer). Functionally, catalyzes the phospholipid dependent N-acylation of the N-terminal cysteine of apolipoprotein, the last step in lipoprotein maturation. The chain is Apolipoprotein N-acyltransferase from Coxiella burnetii (strain RSA 493 / Nine Mile phase I).